Here is a 383-residue protein sequence, read N- to C-terminus: GTP-binding protein 10 (383 aa).

An Obg domain is found at 13–148 (GNFIDNLRIY…RIIHLDLKLI (136 aa)). The region spanning 149–344 (SDVGLVGFPN…LIGCIRKTMD (196 aa)) is the OBG-type G domain. GTP contacts are provided by residues 155-162 (GFPNAGKS), 202-206 (DLPGL), and 278-281 (NKMD). A disordered region spans residues 362–383 (LQKETSRTVKRNLKNSPQRTHH). Positions 369–383 (TVKRNLKNSPQRTHH) are enriched in basic residues.

Belongs to the TRAFAC class OBG-HflX-like GTPase superfamily. OBG GTPase family.

It is found in the nucleus. The protein localises to the nucleolus. Functionally, may be involved in the ribosome maturation process. This chain is GTP-binding protein 10 (gtpbp10), found in Xenopus tropicalis (Western clawed frog).